Reading from the N-terminus, the 307-residue chain is Ubiquitin recognition factor in ER-associated degradation protein 1 (307 aa).

Residue methionine 1 is modified to N-acetylmethionine. Phosphoserine is present on residues serine 129, serine 231, serine 245, serine 247, and serine 299. Disordered stretches follow at residues 230–255 and 288–307; these read GSGNRLDGKKKGVEPSPSPIKPGDIK and GRFIAFSGEGQSLRKKGRKP.

It belongs to the UFD1 family. As to quaternary structure, heterodimer with NPLOC4, this heterodimer binds VCP and inhibits Golgi membrane fusion. Interacts with USP13. Interacts with ZFAND2B; probably through VCP.

Its subcellular location is the nucleus. It is found in the cytoplasm. The protein resides in the cytosol. The protein operates within protein degradation; proteasomal ubiquitin-dependent pathway. In terms of biological role, essential component of the ubiquitin-dependent proteolytic pathway which degrades ubiquitin fusion proteins. The ternary complex containing UFD1, VCP and NPLOC4 binds ubiquitinated proteins and is necessary for the export of misfolded proteins from the ER to the cytoplasm, where they are degraded by the proteasome. The NPLOC4-UFD1-VCP complex regulates spindle disassembly at the end of mitosis and is necessary for the formation of a closed nuclear envelope. It may be involved in the development of some ectoderm-derived structures. Acts as a negative regulator of type I interferon production via the complex formed with VCP and NPLOC4, which binds to RIGI and recruits RNF125 to promote ubiquitination and degradation of RIGI. This Mus musculus (Mouse) protein is Ubiquitin recognition factor in ER-associated degradation protein 1.